The chain runs to 236 residues: Small ribosomal subunit protein uS3 (236 aa).

Residues 39 to 107 (IRKFLKREMY…EVFINIKEAK (69 aa)) form the KH type-2 domain. Positions 214-229 (PEKKEESKSGDKEVRS) are enriched in basic and acidic residues. Residues 214–236 (PEKKEESKSGDKEVRSKSRRGRQ) are disordered.

This sequence belongs to the universal ribosomal protein uS3 family. As to quaternary structure, part of the 30S ribosomal subunit. Forms a tight complex with proteins S10 and S14.

Binds the lower part of the 30S subunit head. Binds mRNA in the 70S ribosome, positioning it for translation. This is Small ribosomal subunit protein uS3 from Helicobacter hepaticus (strain ATCC 51449 / 3B1).